Consider the following 486-residue polypeptide: Keratin, type II cuticular Hb6 (486 aa).

The interval 1 to 106 (MTCGSYCGGR…PNAQCVKHEE (106 aa)) is head. In terms of domain architecture, IF rod spans 106–417 (EKEQIKCLNS…RLLEGEEQRL (312 aa)). A coil 1A region spans residues 107-141 (KEQIKCLNSKFAAFIDKVRFLEQQNKLLETKWQFY). The tract at residues 142-151 (QNRKCCESNM) is linker 1. Residues 152 to 252 (EPLFEGYIEA…YDEETRILHS (101 aa)) are coil 1B. Residue K212 forms a Glycyl lysine isopeptide (Lys-Gly) (interchain with G-Cter in SUMO1) linkage. The linker 12 stretch occupies residues 253-269 (HISDTSIVVKMDNSRDL). Residues 270-413 (NMDCVVAEIK…TTYRRLLEGE (144 aa)) are coil 2. Residues 414–486 (EQRLCEGVGS…GACSGGCKKC (73 aa)) are tail.

This sequence belongs to the intermediate filament family. As to quaternary structure, heterotetramer of two type I and two type II keratins.

The chain is Keratin, type II cuticular Hb6 (Krt86) from Mus musculus (Mouse).